The chain runs to 505 residues: L-arabinose isomerase (505 aa).

Mn(2+) is bound by residues E308, E335, H352, and H453.

Belongs to the arabinose isomerase family. Mn(2+) is required as a cofactor.

It catalyses the reaction beta-L-arabinopyranose = L-ribulose. It participates in carbohydrate degradation; L-arabinose degradation via L-ribulose; D-xylulose 5-phosphate from L-arabinose (bacterial route): step 1/3. Catalyzes the conversion of L-arabinose to L-ribulose. This Bifidobacterium animalis subsp. lactis (strain AD011) protein is L-arabinose isomerase.